The sequence spans 1550 residues: Cellulose synthase 1 (1550 aa).

Positions 1–741 (MPEVRSSTQS…KERVLKGTVK (741 aa)) are catalytic. The next 3 membrane-spanning stretches (helical) occupy residues 26-46 (GAGL…TSVT), 47-67 (LPPE…FIVG), and 106-126 (GLLG…LFLS). Residues 147–240 (EWPTVDIFVP…YILIFDCDHV (94 aa)) are catalytic subdomain A. The active site involves D189. The substrate site is built by D236 and D238. Residues 317–377 (TAIEQIGGFA…GQRVRWARGM (61 aa)) form a catalytic subdomain B region. D333 is a catalytic residue. The next 5 helical transmembrane spans lie at 398-418 (LCYL…IFLS), 423-443 (FLFF…AYAI), 468-488 (VYET…LLSP), 507-527 (FDLG…GGLA), and 547-567 (LLNS…IAVG). Residues 572–647 (QKRNSHRIPA…PARIIRAGNG (76 aa)) enclose the PilZ domain. Disordered stretches follow at residues 711–734 (SSPT…RKER) and 768–813 (APAH…QPLA). Positions 742-1550 (MVSLLALLTF…KQLEDERRKS (809 aa)) are cyclic di-GMP binding domain. The span at 768 to 796 (APAHQPEASDLPPLPALLPATSGAAQAGA) shows a compositional bias: low complexity. Residues 1513–1533 (VLLVGLLGCILIVSVLARALA) traverse the membrane as a helical segment.

It in the N-terminal section; belongs to the glycosyltransferase 2 family. The protein in the C-terminal section; belongs to the AcsB/BcsB family. Requires Mg(2+) as cofactor.

Its subcellular location is the cell inner membrane. The catalysed reaction is [(1-&gt;4)-beta-D-glucosyl](n) + UDP-alpha-D-glucose = [(1-&gt;4)-beta-D-glucosyl](n+1) + UDP + H(+). It functions in the pathway glycan metabolism; bacterial cellulose biosynthesis. Its activity is regulated as follows. Activated by c-di-GMP. Its function is as follows. Bifunctional protein comprised of a catalytic subunit and a regulatory subunit. The catalytic subunit of cellulose synthase polymerizes uridine 5'-diphosphate glucose to cellulose in a processive way. The thick cellulosic mats generated by this enzyme probably provide a specialized protective environment to the bacterium. The regulatory subunit binds bis-(3'-5') cyclic diguanylic acid (c-di-GMP). The polypeptide is Cellulose synthase 1 (acsAB) (Komagataeibacter xylinus (Gluconacetobacter xylinus)).